A 150-amino-acid polypeptide reads, in one-letter code: MELHQLKSVSKSRNHKSKVVGRGHGSGLGKTSSRGQKGQKARKSGLTRLGFEGGQTPLYRRLPKYGVANKGILKKRWVVLNLNKVAKLNLKTVTRATLIEKKVISKKNNLPLKLIGNTKLTTPIHFEVQKISKNALNAVQTSKGSVKIIT.

Positions 1–49 (MELHQLKSVSKSRNHKSKVVGRGHGSGLGKTSSRGQKGQKARKSGLTRL) are disordered. Residues 10–21 (SKSRNHKSKVVG) show a composition bias toward basic residues.

The protein belongs to the universal ribosomal protein uL15 family. As to quaternary structure, part of the 50S ribosomal subunit.

Binds to the 23S rRNA. This Mycoplasma genitalium (strain ATCC 33530 / DSM 19775 / NCTC 10195 / G37) (Mycoplasmoides genitalium) protein is Large ribosomal subunit protein uL15.